The primary structure comprises 194 residues: MMRLRRLLERMLRRCCFRDCSVRLTKSLCFKKLIEFDATKNQIVTKLQRLKKKFNNAVKNARKKGQTEDEVEYAKESEKKRFDLSIMIWGSNGVLVAGKSSKKKVAPKEMKPEETDAKVVNEGLSIGREMVPFGSSCGLDESKLTTGWENVEDGAEKREVEEKWKKFKDKLFELLYERSVLMNKTEAMMFKAES.

Belongs to the GeBP family.

This is Probable transcription factor At4g00130 from Arabidopsis thaliana (Mouse-ear cress).